Reading from the N-terminus, the 23-residue chain is Phallacidin proprotein (23 aa).

Residue proline 1 is a propeptide. The cyclopeptide (Ala-Pro) cross-link spans 2–8 (AWLVDCP). Residues 3–7 (WLVDC) constitute a cross-link (2'-cysteinyl-6'-hydroxytryptophan sulfoxide (Trp-Cys)). Residues 9 to 23 (CVGDDISRLLTRGEK) constitute a propeptide that is removed on maturation.

The protein belongs to the MSDIN fungal toxin family. Processed by the macrocyclase-peptidase enzyme POPB to yield a toxic cyclic heptapeptide. POPB first removes 10 residues from the N-terminus. Conformational trapping of the remaining peptide forces the enzyme to release this intermediate rather than proceed to macrocyclization. The enzyme rebinds the remaining peptide in a different conformation and catalyzes macrocyclization of the N-terminal 7 residues.

Functionally, major toxin that belongs to the bicyclic heptapeptides called phallotoxins. Although structurally related to amatoxins, phallotoxins have a different mode of action, which is the stabilization of F-actin. Phallotoxins are poisonous when administered parenterally, but not orally because of poor absorption. This chain is Phallacidin proprotein, found in Amanita rimosa.